Consider the following 1410-residue polypeptide: ABC transporter C family member 13 (1410 aa).

8 consecutive transmembrane segments (helical) span residues 23–43 (IVLGFGANVVTLLLILILTIT), 60–80 (LLYVTPALGACLSCVDLVLLV), 88–108 (VILCFVPLSGFVMWIAVILSL), 122–142 (ILCFWWIFRFLTDALHLNMIF), 148–168 (QEICLIMLDIAFGISINVLRI), 391–411 (LSGLAITILLIPVNKWISVLI), 474–494 (VFFWATTPTLFSLCTFGLFAL), and 505–525 (FTCLALFNSLISPLNSFPWVI). The ABC transmembrane type-1 1 domain occupies 255–530 (CNNYSTPSLI…FPWVINGLID (276 aa)). Residues 564 to 791 (VCVEDASCTW…ISPTFSLTNE (228 aa)) form the ABC transporter 1 domain. 602 to 609 (GEVGSGKT) provides a ligand contact to ATP. The next 6 helical transmembrane spans lie at 844–864 (AVFSGWFITIVILVSAVLMQG), 889–909 (TSFYLMVLCIFCIINSILTLV), 963–985 (SLPFILNILLANFVGLLGIIVVL), 990–1009 (VLFLLLLLPFWYIYSKLQVF), 1087–1107 (IVLFVAVMAVLGSGGNFPISF), and 1111–1131 (GLVGLALSYAAPLVSLLGSLL). The ABC transmembrane type-1 2 domain maps to 852-1139 (TIVILVSAVL…LLTSFTETEK (288 aa)). Positions 1174–1407 (VEFHNVTMRY…DSSTFSSFVR (234 aa)) constitute an ABC transporter 2 domain. 1208–1215 (GRTGAGKS) serves as a coordination point for ATP.

It belongs to the ABC transporter superfamily. ABCC family. Conjugate transporter (TC 3.A.1.208) subfamily. Ubiquitous.

Its subcellular location is the membrane. It carries out the reaction ATP + H2O + xenobioticSide 1 = ADP + phosphate + xenobioticSide 2.. Pump for glutathione S-conjugates. The protein is ABC transporter C family member 13 (ABCC13) of Arabidopsis thaliana (Mouse-ear cress).